We begin with the raw amino-acid sequence, 146 residues long: Large ribosomal subunit protein uL15 (146 aa).

Positions 1 to 13 (MKLHELKPAEGSR) are enriched in basic and acidic residues. The disordered stretch occupies residues 1–56 (MKLHELKPAEGSRKVRNRVGRGAATGNGKTSGRGQKGQKARSGGSVRPGFEGGQLP). Over residues 23–35 (AATGNGKTSGRGQ) the composition is skewed to gly residues.

This sequence belongs to the universal ribosomal protein uL15 family. As to quaternary structure, part of the 50S ribosomal subunit.

In terms of biological role, binds to the 23S rRNA. This is Large ribosomal subunit protein uL15 from Staphylococcus saprophyticus subsp. saprophyticus (strain ATCC 15305 / DSM 20229 / NCIMB 8711 / NCTC 7292 / S-41).